We begin with the raw amino-acid sequence, 211 residues long: FMN-dependent NADH:quinone oxidoreductase 3 (211 aa).

Residue 102 to 105 (MWNF) participates in FMN binding.

Belongs to the azoreductase type 1 family. As to quaternary structure, homodimer. The cofactor is FMN.

It carries out the reaction 2 a quinone + NADH + H(+) = 2 a 1,4-benzosemiquinone + NAD(+). The catalysed reaction is N,N-dimethyl-1,4-phenylenediamine + anthranilate + 2 NAD(+) = 2-(4-dimethylaminophenyl)diazenylbenzoate + 2 NADH + 2 H(+). Quinone reductase that provides resistance to thiol-specific stress caused by electrophilic quinones. Functionally, also exhibits azoreductase activity. Catalyzes the reductive cleavage of the azo bond in aromatic azo compounds to the corresponding amines. This Bacillus cereus (strain ATCC 10987 / NRS 248) protein is FMN-dependent NADH:quinone oxidoreductase 3.